The following is a 156-amino-acid chain: Small ribosomal subunit protein uS7 (156 aa).

This sequence belongs to the universal ribosomal protein uS7 family. Part of the 30S ribosomal subunit. Contacts proteins S9 and S11.

In terms of biological role, one of the primary rRNA binding proteins, it binds directly to 16S rRNA where it nucleates assembly of the head domain of the 30S subunit. Is located at the subunit interface close to the decoding center, probably blocks exit of the E-site tRNA. The chain is Small ribosomal subunit protein uS7 from Streptococcus pyogenes serotype M1.